Consider the following 425-residue polypeptide: Protein let-756 (425 aa).

2 disordered regions span residues 277–298 (LEEK…LRKE) and 314–425 (EEEL…QRYP). The span at 281–291 (KRRREKKKRRR) shows a compositional bias: basic residues. Residues 329 to 340 (ASTQTRYNRPQN) show a composition bias toward polar residues. Over residues 378 to 389 (HNSHHHHHHHPR) the composition is skewed to basic residues. A compositionally biased stretch (polar residues) spans 395–425 (DPQQRHQSQQHYLAQTVSNPNRQNVNYQRYP).

The protein belongs to the heparin-binding growth factors family. Interacts with pal-1. As to expression, expressed in pharynx, CAN neuron and body wall muscles.

Its subcellular location is the nucleus. It localises to the membrane. In terms of biological role, required for larval development. Probably by binding receptor egl-15, negatively regulates membrane protrusion from body wall muscles during larval development. The polypeptide is Protein let-756 (let-756) (Caenorhabditis elegans).